The sequence spans 207 residues: Large ribosomal subunit protein uL4 (207 aa).

It belongs to the universal ribosomal protein uL4 family. As to quaternary structure, part of the 50S ribosomal subunit.

Functionally, one of the primary rRNA binding proteins, this protein initially binds near the 5'-end of the 23S rRNA. It is important during the early stages of 50S assembly. It makes multiple contacts with different domains of the 23S rRNA in the assembled 50S subunit and ribosome. Forms part of the polypeptide exit tunnel. This is Large ribosomal subunit protein uL4 from Rickettsia conorii (strain ATCC VR-613 / Malish 7).